Consider the following 255-residue polypeptide: Indole-3-glycerol phosphate synthase (255 aa).

The protein belongs to the TrpC family.

The catalysed reaction is 1-(2-carboxyphenylamino)-1-deoxy-D-ribulose 5-phosphate + H(+) = (1S,2R)-1-C-(indol-3-yl)glycerol 3-phosphate + CO2 + H2O. Its pathway is amino-acid biosynthesis; L-tryptophan biosynthesis; L-tryptophan from chorismate: step 4/5. The protein is Indole-3-glycerol phosphate synthase of Streptococcus thermophilus (strain ATCC BAA-250 / LMG 18311).